Reading from the N-terminus, the 106-residue chain is Large ribosomal subunit protein bL21 (106 aa).

Belongs to the bacterial ribosomal protein bL21 family. Part of the 50S ribosomal subunit. Contacts protein L20.

In terms of biological role, this protein binds to 23S rRNA in the presence of protein L20. The sequence is that of Large ribosomal subunit protein bL21 from Dichelobacter nodosus (strain VCS1703A).